The sequence spans 1266 residues: Neuronal-glial cell adhesion molecule (1266 aa).

The first 20 residues, 1-20 (MALPMVGLLLLLLLGGPGAA), serve as a signal peptide directing secretion. The Extracellular portion of the chain corresponds to 21-1130 (ITIPPEYGAH…PQPGGGVCTK (1110 aa)). 6 Ig-like C2-type domains span residues 36–128 (PELT…NVIA), 135–221 (PKEK…KEPL), 236–322 (PRLL…HSVT), 327–413 (PYWV…AFLH), 418–506 (PLRM…ALLE), and 510–597 (PTRI…AQLR). Intrachain disulfides connect cysteine 58–cysteine 110, cysteine 154–cysteine 205, cysteine 260–cysteine 306, and cysteine 348–cysteine 397. Residue asparagine 97 is glycosylated (N-linked (GlcNAc...) asparagine). N-linked (GlcNAc...) asparagine glycans are attached at residues asparagine 288, asparagine 390, asparagine 434, asparagine 472, and asparagine 498. Residues cysteine 441 and cysteine 490 are joined by a disulfide bond. Cysteine 532 and cysteine 581 are joined by a disulfide. Fibronectin type-III domains follow at residues 603-698 (PSRD…TPPA), 700-804 (PERN…SGED), 809-930 (YPEN…TPEG), 934-1021 (PPEE…TKPE), and 1022-1118 (PPSP…TNGT). Positions 685 to 710 (EHHAPSAPIETPPAAPERNPGGVHGE) are disordered. N-linked (GlcNAc...) asparagine glycosylation is found at asparagine 712 and asparagine 819. Positions 857–882 (SRRQAPPDPPQIPQSPAEDPPPFPPV) are disordered. Positions 862-881 (PPDPPQIPQSPAEDPPPFPP) are enriched in pro residues. The Cell attachment site signature appears at 914-916 (RGD). A disordered region spans residues 1004–1025 (STPRERPALQTVGSTKPEPPSP). 4 N-linked (GlcNAc...) asparagine glycosylation sites follow: asparagine 1061, asparagine 1075, asparagine 1100, and asparagine 1116. Residues 1131–1153 (GWFIGFVSSVVLLLLILLILCFI) form a helical membrane-spanning segment. Residues 1154–1266 (KRSKGGKYSV…ASPCAGPPLD (113 aa)) lie on the Cytoplasmic side of the membrane. The span at 1163–1195 (VKDKEDTQVDSEARPMKDETFGEYRSLESEAEK) shows a compositional bias: basic and acidic residues. Residues 1163-1266 (VKDKEDTQVD…ASPCAGPPLD (104 aa)) form a disordered region. Residues 1199–1211 (SGSGAGSGVGSPG) are compositionally biased toward gly residues.

This sequence belongs to the immunoglobulin superfamily. L1/neurofascin/NgCAM family. Binds to itself and to axonin 1. In terms of tissue distribution, brain.

The protein localises to the cell membrane. In terms of biological role, mediates the adhesion of neurons to neurons and neurons to glia. It is involved in neuronal migration, neurite fasciculation and outgrowth. This Gallus gallus (Chicken) protein is Neuronal-glial cell adhesion molecule.